A 350-amino-acid polypeptide reads, in one-letter code: Pleckstrin (350 aa).

Residues 4–101 (KRIREGYLVK…WVRDIKKAIK (98 aa)) form the PH 1 domain. Position 64 is an N6-acetyllysine (K64). S113 and S117 each carry phosphoserine; by PKC. Residues 136–221 (TEKGIKELNL…NPDAFYYFPD (86 aa)) enclose the DEP domain. Residues 244–347 (VIIKQGCLLK…WIRAIQMASR (104 aa)) enclose the PH 2 domain.

In terms of biological role, major protein kinase C substrate of platelets. The polypeptide is Pleckstrin (PLEK) (Homo sapiens (Human)).